We begin with the raw amino-acid sequence, 341 residues long: Putative NADPH-dependent methylglyoxal reductase GRP2 (341 aa).

The NADP(+) site is built by Lys40 and Tyr171.

This sequence belongs to the NAD(P)-dependent epimerase/dehydratase family. Dihydroflavonol-4-reductase subfamily.

The protein resides in the cytoplasm. The enzyme catalyses (S)-lactaldehyde + NADP(+) = methylglyoxal + NADPH + H(+). Functionally, catalyzes the irreversible reduction of the cytotoxic compound methylglyoxal (MG, 2-oxopropanal) to (S)-lactaldehyde. MG is synthesized via a bypath of glycolysis from dihydroxyacetone phosphate and is believed to play a role in cell cycle regulation and stress adaptation. This chain is Putative NADPH-dependent methylglyoxal reductase GRP2 (GRP2), found in Candida albicans (strain SC5314 / ATCC MYA-2876) (Yeast).